The following is a 655-amino-acid chain: Macrolide export ATP-binding/permease protein MacB (655 aa).

The ABC transporter domain occupies 6-244; the sequence is IELRDVWREF…DALAGDEGPE (239 aa). 42 to 49 is a binding site for ATP; that stretch reads GASGSGKS. Positions 225 to 252 are disordered; it reads DQARPDAPPLDALAGDEGPEAPRPAPQP. 4 helical membrane-spanning segments follow: residues 280–300, 527–547, 583–603, and 620–640; these read LTMLGIIIGIAAVVSVVALGA, LTLLVSMIAVISLVVVGIGVM, VLVCLIGGVLGILLSLSIGVL, and SMVLAFVCSTLIGVAFGFLPA.

It belongs to the ABC transporter superfamily. Macrolide exporter (TC 3.A.1.122) family. As to quaternary structure, homodimer.

It localises to the cell inner membrane. In terms of biological role, non-canonical ABC transporter that contains transmembrane domains (TMD), which form a pore in the inner membrane, and an ATP-binding domain (NBD), which is responsible for energy generation. Confers resistance against macrolides. In Bordetella avium (strain 197N), this protein is Macrolide export ATP-binding/permease protein MacB.